An 86-amino-acid chain; its full sequence is Mu-theraphotoxin-Hhn1b 1 (86 aa).

An N-terminal signal peptide occupies residues 1–21 (MKASMFLALAGLALLFVVCYA). Positions 22-49 (SESEEKEFSNELLSSVLAVDDNSKGEER) are excised as a propeptide. 3 cysteine pairs are disulfide-bonded: cysteine 51–cysteine 66, cysteine 58–cysteine 73, and cysteine 65–cysteine 80. Position 84 is an isoleucine amide (isoleucine 84).

Belongs to the neurotoxin 10 (Hwtx-1) family. 22 (Htx-4) subfamily. Monomer. In terms of tissue distribution, expressed by the venom gland.

It localises to the secreted. Its function is as follows. Neurotoxin that selectively inhibits neuronal tetrodotoxin-sensitive voltage-gated sodium channels (Nav) (IC(50)=44.6 nM). It is active on Nav1.2/SCN2A (IC(50)=22.4 nM), Nav1.6/SCN8A (IC(50)=50.1 nM) and Nav1.7/SCN9A (IC(50)=48.9 nM). It shows low affinity for lipid bilayers. The sequence is that of Mu-theraphotoxin-Hhn1b 1 from Cyriopagopus hainanus (Chinese bird spider).